The sequence spans 306 residues: D-alanine--D-alanine ligase (306 aa).

Residues E18 and S150 contribute to the active site. The 200-residue stretch at 104–303 folds into the ATP-grasp domain; the sequence is KMLWKAFGLP…FEQLVVKILE (200 aa). ATP is bound at residue 134 to 189; sequence VAKLGLPLMVKPSLEGSSVGLTKVKAVEELKSAVEYALKFDNTILIEEWLAGDELT. The Mg(2+) site is built by D257, E270, and N272. S281 is an active-site residue.

Belongs to the D-alanine--D-alanine ligase family. It depends on Mg(2+) as a cofactor. Mn(2+) is required as a cofactor.

It localises to the cytoplasm. The enzyme catalyses 2 D-alanine + ATP = D-alanyl-D-alanine + ADP + phosphate + H(+). It participates in cell wall biogenesis; peptidoglycan biosynthesis. Cell wall formation. In Haemophilus influenzae (strain ATCC 51907 / DSM 11121 / KW20 / Rd), this protein is D-alanine--D-alanine ligase.